Here is a 407-residue protein sequence, read N- to C-terminus: UPF0761 membrane protein AZOSEA40600 (407 aa).

6 helical membrane-spanning segments follow: residues 29 to 49, 92 to 112, 132 to 152, 174 to 194, 207 to 227, and 239 to 259; these read SLAF…IALF, GLTL…LMTI, LMVH…SVLA, FARL…YYAV, GGIA…LFIV, and FAVL…ILLG.

It belongs to the UPF0761 family.

It is found in the cell inner membrane. This is UPF0761 membrane protein AZOSEA40600 from Aromatoleum aromaticum (strain DSM 19018 / LMG 30748 / EbN1) (Azoarcus sp. (strain EbN1)).